A 157-amino-acid polypeptide reads, in one-letter code: Crossover junction endodeoxyribonuclease RuvC (157 aa).

Active-site residues include D7, E66, and D139. Mg(2+) is bound by residues D7, E66, and D139.

This sequence belongs to the RuvC family. Homodimer which binds Holliday junction (HJ) DNA. The HJ becomes 2-fold symmetrical on binding to RuvC with unstacked arms; it has a different conformation from HJ DNA in complex with RuvA. In the full resolvosome a probable DNA-RuvA(4)-RuvB(12)-RuvC(2) complex forms which resolves the HJ. Mg(2+) serves as cofactor.

It localises to the cytoplasm. The enzyme catalyses Endonucleolytic cleavage at a junction such as a reciprocal single-stranded crossover between two homologous DNA duplexes (Holliday junction).. Its function is as follows. The RuvA-RuvB-RuvC complex processes Holliday junction (HJ) DNA during genetic recombination and DNA repair. Endonuclease that resolves HJ intermediates. Cleaves cruciform DNA by making single-stranded nicks across the HJ at symmetrical positions within the homologous arms, yielding a 5'-phosphate and a 3'-hydroxyl group; requires a central core of homology in the junction. The consensus cleavage sequence is 5'-(A/T)TT(C/G)-3'. Cleavage occurs on the 3'-side of the TT dinucleotide at the point of strand exchange. HJ branch migration catalyzed by RuvA-RuvB allows RuvC to scan DNA until it finds its consensus sequence, where it cleaves and resolves the cruciform DNA. Required for efficient infection in a mouse model system. This Helicobacter pylori (strain G27) protein is Crossover junction endodeoxyribonuclease RuvC.